The primary structure comprises 476 residues: MVGAMWKVIVSLVLLMPGPCDGLFRSLYRSVSMPPKGDSGQPLFLTPYIEAGKIQKGRELSLVGPFPGLNMKSYAGFLTVNKTYNSNLFFWFFPAQIQPEDAPVVLWLQGGPGGSSMFGLFVEHGPYVVTSNMTLRDRDFPWTTTLSMLYIDNPVGTGFSFTDDTHGYAVNEDDVARDLYSALIQFFQIFPEYKNNDFYVTGESYAGKYVPAIAHLIHSLNPVREVKINLNGIAIGDGYSDPESIIGGYAEFLYQIGLLDEKQKKYFQKQCHECIEHIRKQNWFEAFEILDKLLDGDLTSDPSYFQNVTGCSNYYNFLRCTEPEDQLYYVKFLSLPEVRQAIHVGNQTFNDGTIVEKYLREDTVQSVKPWLTEIMNNYKVLIYNGQLDIIVAAALTERSLMGMDWKGSQEYKKAEKKVWKIFKSDSEVAGYIRQAGDFHQVIIRGGGHILPYDQPLRAFDMINRFIYGKGWDPYVG.

Residues 1–22 form the signal peptide; it reads MVGAMWKVIVSLVLLMPGPCDG. N-linked (GlcNAc...) asparagine glycans are attached at residues asparagine 81 and asparagine 132. Serine 204 is a catalytic residue. Asparagine 307 and asparagine 346 each carry an N-linked (GlcNAc...) asparagine glycan. Residues aspartate 388 and histidine 448 contribute to the active site.

This sequence belongs to the peptidase S10 family. As to expression, expressed in macrophages but not in other leukocytes. Abundantly expressed in heart and kidney. Also expressed in spleen, leukocytes, and placenta.

Functionally, may be involved in the digestion of phagocytosed particles in the lysosome, participation in an inflammatory protease cascade, and trimming of peptides for antigen presentation. The polypeptide is Probable serine carboxypeptidase CPVL (CPVL) (Homo sapiens (Human)).